The sequence spans 849 residues: Protein translocase subunit SecA (849 aa).

Residues Gln-85, 103 to 107 (GEGKT), and Asp-493 contribute to the ATP site. Positions 832, 834, 843, and 844 each coordinate Zn(2+).

Belongs to the SecA family. Monomer and homodimer. Part of the essential Sec protein translocation apparatus which comprises SecA, SecYEG and auxiliary proteins SecDF. Other proteins may also be involved. Zn(2+) is required as a cofactor.

Its subcellular location is the cell membrane. It localises to the cytoplasm. The catalysed reaction is ATP + H2O + cellular proteinSide 1 = ADP + phosphate + cellular proteinSide 2.. Functionally, part of the Sec protein translocase complex. Interacts with the SecYEG preprotein conducting channel. Has a central role in coupling the hydrolysis of ATP to the transfer of proteins into and across the cell membrane, serving as an ATP-driven molecular motor driving the stepwise translocation of polypeptide chains across the membrane. This Streptococcus thermophilus (strain ATCC BAA-250 / LMG 18311) protein is Protein translocase subunit SecA.